Here is a 475-residue protein sequence, read N- to C-terminus: Sulfate adenylyltransferase subunit 1 (475 aa).

The tr-type G domain occupies 25-239 (KSLLRFLTCG…EVLETVEIQR (215 aa)). A G1 region spans residues 34–41 (GSVDDGKS). 34–41 (GSVDDGKS) provides a ligand contact to GTP. The interval 92-96 (GITID) is G2. The segment at 113–116 (DTPG) is G3. GTP contacts are provided by residues 113–117 (DTPGH) and 168–171 (NKMD). Residues 168–171 (NKMD) form a G4 region. Residues 206 to 208 (SAL) are G5.

The protein belongs to the TRAFAC class translation factor GTPase superfamily. Classic translation factor GTPase family. CysN/NodQ subfamily. In terms of assembly, heterodimer composed of CysD, the smaller subunit, and CysN.

The catalysed reaction is sulfate + ATP + H(+) = adenosine 5'-phosphosulfate + diphosphate. It participates in sulfur metabolism; hydrogen sulfide biosynthesis; sulfite from sulfate: step 1/3. Its function is as follows. With CysD forms the ATP sulfurylase (ATPS) that catalyzes the adenylation of sulfate producing adenosine 5'-phosphosulfate (APS) and diphosphate, the first enzymatic step in sulfur assimilation pathway. APS synthesis involves the formation of a high-energy phosphoric-sulfuric acid anhydride bond driven by GTP hydrolysis by CysN coupled to ATP hydrolysis by CysD. The sequence is that of Sulfate adenylyltransferase subunit 1 from Escherichia coli O157:H7.